Consider the following 140-residue polypeptide: Lysozyme B (140 aa).

The N-terminal stretch at 1–18 (MKAFIVLVALALAAPALG) is a signal peptide. A C-type lysozyme domain is found at 19 to 140 (RTMDRCSLAR…GWLPSIDDCF (122 aa)). Disulfide bonds link Cys-24-Cys-139, Cys-45-Cys-129, Cys-80-Cys-96, and Cys-92-Cys-110. Catalysis depends on residues Glu-50 and Asp-68.

Belongs to the glycosyl hydrolase 22 family. As to expression, found in the midgut.

It catalyses the reaction Hydrolysis of (1-&gt;4)-beta-linkages between N-acetylmuramic acid and N-acetyl-D-glucosamine residues in a peptidoglycan and between N-acetyl-D-glucosamine residues in chitodextrins.. In terms of biological role, unlikely to play an active role in the humoral immune defense. May have a function in the digestion of bacteria in the food. The chain is Lysozyme B (LysB) from Drosophila melanogaster (Fruit fly).